The following is a 153-amino-acid chain: Pro-corazonin (153 aa).

An N-terminal signal peptide occupies residues 1–20; it reads MLRLLLLPLFLFTLSMACMG. Gln-21 bears the Pyrrolidone carboxylic acid mark. Position 31 is an asparagine amide (Asn-31). Positions 64 to 153 are excised as a propeptide; it reads LERCLLQLQH…AVEPNDYGKH (90 aa).

Belongs to the corazonin family. Expression is restricted to 24 neurons in the larval CNS (8 in the brain and 16 in the ventral nerve cord) and 12-16 neurons in the pars lateralis of the adult brain.

The protein localises to the secreted. Functionally, cardioactive peptide. Corazonin is probably involved in the physiological regulation of the heart beat. Clock (Clk) and cycle (cyc) proteins negatively regulate Crz transcription in a cell-specific manner. In Drosophila virilis (Fruit fly), this protein is Pro-corazonin (Crz).